The sequence spans 238 residues: tRNA (guanine-N(7)-)-methyltransferase (238 aa).

S-adenosyl-L-methionine contacts are provided by Glu68, Glu93, Asp120, and Asp143. Asp143 is an active-site residue. Residues Lys147, Asp179, and 216–219 (TKFE) each bind substrate.

Belongs to the class I-like SAM-binding methyltransferase superfamily. TrmB family.

The catalysed reaction is guanosine(46) in tRNA + S-adenosyl-L-methionine = N(7)-methylguanosine(46) in tRNA + S-adenosyl-L-homocysteine. It functions in the pathway tRNA modification; N(7)-methylguanine-tRNA biosynthesis. Functionally, catalyzes the formation of N(7)-methylguanine at position 46 (m7G46) in tRNA. The polypeptide is tRNA (guanine-N(7)-)-methyltransferase (Shewanella frigidimarina (strain NCIMB 400)).